A 243-amino-acid chain; its full sequence is Phosphate-specific transport system accessory protein PhoU (243 aa).

It belongs to the PhoU family. In terms of assembly, homodimer.

The protein localises to the cytoplasm. In terms of biological role, part of the phosphate (Pho) regulon, which plays a key role in phosphate homeostasis. Encoded together with proteins of the phosphate-specific transport (Pst) system in the polycistronic pstSCAB-phoU operon. PhoU is essential for the repression of the Pho regulon at high phosphate conditions. In this role, it may bind, possibly as a chaperone, to PhoR, PhoB or a PhoR-PhoB complex to promote dephosphorylation of phospho-PhoB, or inhibit formation of the PhoR-PhoB transitory complex. This Serratia marcescens protein is Phosphate-specific transport system accessory protein PhoU.